Consider the following 360-residue polypeptide: Membrane-bound lytic murein transglycosylase C (360 aa).

The first 16 residues, 1–16, serve as a signal peptide directing secretion; sequence MKKYLALALIAPLLVS. Cysteine 17 carries N-palmitoyl cysteine lipidation. A lipid anchor (S-diacylglycerol cysteine) is attached at cysteine 17.

This sequence belongs to the transglycosylase Slt family.

It is found in the cell outer membrane. It catalyses the reaction Exolytic cleavage of the (1-&gt;4)-beta-glycosidic linkage between N-acetylmuramic acid (MurNAc) and N-acetylglucosamine (GlcNAc) residues in peptidoglycan, from either the reducing or the non-reducing ends of the peptidoglycan chains, with concomitant formation of a 1,6-anhydrobond in the MurNAc residue.. Its function is as follows. Murein-degrading enzyme. May play a role in recycling of muropeptides during cell elongation and/or cell division. The chain is Membrane-bound lytic murein transglycosylase C from Klebsiella pneumoniae (strain 342).